Reading from the N-terminus, the 202-residue chain is Small ribosomal subunit protein uS4c (202 aa).

The S4 RNA-binding domain occupies 90–153 (MRLDNIIFRL…KSETIISKNI (64 aa)).

It belongs to the universal ribosomal protein uS4 family. In terms of assembly, part of the 30S ribosomal subunit. Contacts protein S5. The interaction surface between S4 and S5 is involved in control of translational fidelity.

It is found in the plastid. Its subcellular location is the chloroplast. Functionally, one of the primary rRNA binding proteins, it binds directly to 16S rRNA where it nucleates assembly of the body of the 30S subunit. In terms of biological role, with S5 and S12 plays an important role in translational accuracy. This is Small ribosomal subunit protein uS4c (rps4) from Catharomnion ciliatum (Moss).